We begin with the raw amino-acid sequence, 155 residues long: Troponin C, isoform 3 (155 aa).

EF-hand domains follow at residues 11 to 46 (EQIAVLQKAFNSFDHQKTGSIPTEMVADILRLMGQP), 47 to 82 (FDKKILEELIEEVDEDKSGRLEFGEFVQLAAKFIVE), 87 to 122 (AMQKELREAFRLYDKQGNGFIPTTCLKEILKELDDQ), and 123 to 155 (LTEQELDIMIEEIDSDGSGTVDFDEFMEMMTGE). The Ca(2+) site is built by aspartate 60, aspartate 62, serine 64, arginine 66, and glutamate 71. Residues aspartate 136, aspartate 138, serine 140, threonine 142, and glutamate 147 each contribute to the Ca(2+) site.

This sequence belongs to the troponin C family. As to expression, present in both larval and adult muscles.

This Drosophila melanogaster (Fruit fly) protein is Troponin C, isoform 3 (TpnC73F).